The chain runs to 391 residues: Oxygen-dependent coproporphyrinogen-III oxidase, chloroplastic (391 aa).

Positions 1–13 are enriched in polar residues; it reads MASSLLTTPSQTL. Residues 1–34 form a disordered region; sequence MASSLLTTPSQTLAPNPAAARARRSSPAAAQVSF. Low complexity predominate over residues 14-30; sequence APNPAAARARRSSPAAA. Residues 125–134 form an important for dimerization region; the sequence is VLQDGNVFEK. S179 provides a ligand contact to substrate. H193 (proton donor) is an active-site residue. Substrate contacts are provided by residues 195–197 and 349–354; these read NYR and GGRIES. The segment at 331–366 is important for dimerization; the sequence is YVEFNLVYDRGTTFGLKTGGRIESILVSLPLTARWE.

It belongs to the aerobic coproporphyrinogen-III oxidase family. Homodimer.

The protein localises to the plastid. Its subcellular location is the chloroplast. The enzyme catalyses coproporphyrinogen III + O2 + 2 H(+) = protoporphyrinogen IX + 2 CO2 + 2 H2O. Its pathway is porphyrin-containing compound metabolism; protoporphyrin-IX biosynthesis; protoporphyrinogen-IX from coproporphyrinogen-III (O2 route): step 1/1. Functionally, involved in the heme and chlorophyll biosynthesis. Catalyzes the aerobic oxidative decarboxylation of propionate groups of rings A and B of coproporphyrinogen-III to yield the vinyl groups in protoporphyrinogen-IX. This is Oxygen-dependent coproporphyrinogen-III oxidase, chloroplastic (CPX) from Hordeum vulgare (Barley).